We begin with the raw amino-acid sequence, 62 residues long: Large ribosomal subunit protein bL28 (62 aa).

It belongs to the bacterial ribosomal protein bL28 family.

This chain is Large ribosomal subunit protein bL28, found in Clostridioides difficile (strain 630) (Peptoclostridium difficile).